We begin with the raw amino-acid sequence, 107 residues long: UPF0235 protein RPC_0058 (107 aa).

It belongs to the UPF0235 family.

The protein is UPF0235 protein RPC_0058 of Rhodopseudomonas palustris (strain BisB18).